The sequence spans 1229 residues: ABC transporter B family member 3 (1229 aa).

Residues 22–42 (VLLMIVGSIGAIGNGVGFPLM) traverse the membrane as a helical segment. One can recognise an ABC transmembrane type-1 1 domain in the interval 25 to 313 (MIVGSIGAIG…TTPCLTAFAA (289 aa)). N-linked (GlcNAc...) asparagine glycosylation is present at Asn56. Transmembrane regions (helical) follow at residues 73-93 (FVYL…CWMI), 149-169 (FIQL…KGWL), 172-192 (LVML…PIIV), 252-272 (GLGL…AIWF), and 281-301 (GYTG…SMSL). One can recognise an ABC transporter 1 domain in the interval 348–584 (IELRDVCFSY…HEGAYAQLIR (237 aa)). 383–390 (GESGSGKS) provides a ligand contact to ATP. Asn450 carries N-linked (GlcNAc...) asparagine glycosylation. The segment covering 594–606 (RLESSNELRDRSI) has biased composition (basic and acidic residues). A disordered region spans residues 594–614 (RLESSNELRDRSINRGSSRNI). The N-linked (GlcNAc...) asparagine glycan is linked to Asn645. The next 2 helical transmembrane spans lie at 661 to 681 (ILIL…IFGI) and 706 to 726 (MIFV…TYLF). One can recognise an ABC transmembrane type-1 2 domain in the interval 662-949 (LILGTLLGAV…ASSFAPDSSK (288 aa)). Asn758 is a glycosylation site (N-linked (GlcNAc...) asparagine). 3 consecutive transmembrane segments (helical) span residues 797–817 (IIAF…IPLI), 888–908 (GVGF…CFYV), and 923–943 (VFQV…ASSF). The 239-residue stretch at 984–1222 (IELCHISFTY…EGGVYASLVQ (239 aa)) folds into the ABC transporter 2 domain. 1019 to 1026 (GESGSGKS) contacts ATP. Asn1073 and Asn1173 each carry an N-linked (GlcNAc...) asparagine glycan.

Belongs to the ABC transporter superfamily. ABCB family. Multidrug resistance exporter (TC 3.A.1.201) subfamily.

The protein localises to the membrane. This chain is ABC transporter B family member 3 (ABCB3), found in Arabidopsis thaliana (Mouse-ear cress).